Reading from the N-terminus, the 55-residue chain is Large ribosomal subunit protein bL33 (55 aa).

It belongs to the bacterial ribosomal protein bL33 family.

The chain is Large ribosomal subunit protein bL33 from Methylobacterium sp. (strain 4-46).